Reading from the N-terminus, the 161-residue chain is Dihydrofolate reductase (161 aa).

In terms of domain architecture, DHFR spans 2-161 (NISLIAAISK…YNYSFEILSR (160 aa)). 6–8 (IAA) is a binding site for substrate. NADP(+) is bound by residues 7 to 8 (AA) and 15 to 20 (IGYKNK). Asp28 provides a ligand contact to substrate. Residue 44–47 (GRLT) participates in NADP(+) binding. Arg59 serves as a coordination point for substrate. Residues 64 to 66 (ISS) and 96 to 101 (IGGAKI) each bind NADP(+). Thr115 serves as a coordination point for substrate.

The protein belongs to the dihydrofolate reductase family.

It catalyses the reaction (6S)-5,6,7,8-tetrahydrofolate + NADP(+) = 7,8-dihydrofolate + NADPH + H(+). Its pathway is cofactor biosynthesis; tetrahydrofolate biosynthesis; 5,6,7,8-tetrahydrofolate from 7,8-dihydrofolate: step 1/1. In terms of biological role, key enzyme in folate metabolism. Catalyzes an essential reaction for de novo glycine and purine synthesis, and for DNA precursor synthesis. This is Dihydrofolate reductase (folA) from Buchnera aphidicola subsp. Acyrthosiphon pisum (strain APS) (Acyrthosiphon pisum symbiotic bacterium).